Consider the following 514-residue polypeptide: Glutathione-binding protein GsiB (514 aa).

A signal peptide spans 1–26 (MARAVHRSGLVALGIATALMASCAFA).

Belongs to the bacterial solute-binding protein 5 family. In terms of assembly, the complex is composed of two ATP-binding proteins (GsiA), two transmembrane proteins (GsiC and GsiD) and a solute-binding protein (GsiB).

It localises to the periplasm. In terms of biological role, part of the ABC transporter complex GsiABCD involved in glutathione import. Binds glutathione. The polypeptide is Glutathione-binding protein GsiB (Shigella flexneri serotype 5b (strain 8401)).